The sequence spans 216 residues: Hydrogenase-4 component E (216 aa).

The Periplasmic portion of the chain corresponds to 1–3 (MTG). The helical transmembrane segment at 4 to 24 (SMIVNNLAGLMMLTSLFVISV) threads the bilayer. The Cytoplasmic segment spans residues 25-38 (KSYRLSCGFYACQS). 2 consecutive transmembrane segments (helical) span residues 39–59 (LVLV…QLLI) and 60–80 (WSAS…TYAA). At 81–92 (RNIPQNIPEKAL) the chain is on the cytoplasmic side. The chain crosses the membrane as a helical span at residues 93 to 113 (FGPAMMALLAALIVLLCAFVV). The Periplasmic segment spans residues 114–122 (QPVKLPMAT). A helical membrane pass occupies residues 123–143 (GLKPALAVALGHFLLGLLCIV). Topologically, residues 144 to 150 (SQRNILR) are cytoplasmic. Residues 151–171 (QIFGYCLMENGSHLVLALLAW) traverse the membrane as a helical segment. The Periplasmic segment spans residues 172-175 (RAPE). Residues 176–196 (LVEIGIATDAIFAVIVMVLLA) traverse the membrane as a helical segment. The Cytoplasmic segment spans residues 197 to 216 (RKIWRTHGTLDVNNLTALKG).

The protein localises to the cell inner membrane. In Escherichia coli O157:H7, this protein is Hydrogenase-4 component E (hyfE).